A 482-amino-acid chain; its full sequence is Cis-aconitate decarboxylase-like protein oryM (482 aa).

Belongs to the PrpD family.

The protein operates within secondary metabolite biosynthesis. In terms of biological role, cis-aconitate decarboxylase-like protein; part of the gene cluster that mediates the biosynthesis of oryzines, natural products with an unusual maleidride backbone. The two subunits of the fungal fatty acid synthase oryfasA and oryfasB probably form octenoic acid. This fatty acid is most likely activated by the acyl-CoA ligase oryP to give octenyl-CoA before the citrate synthase-like protein oryE catalyzes condensation with oxaloacetate to form tricarboxylic acid. The next steps of the pathways are conjectural, but a favorite possible route has been proposed, beginning with decarboxylation and concomitant dehydration by the decarboxylase oryM, followed by tautomerization, which may lead to the production of a diene intermediate. Reduction of this diene intermediate could give the known metabolite piliformic acid. On the pathway to oryzine B and oryzine A, however, hydroxylation of the diene by the alpha-ketoglutarate-dependent dioxygenase oryG and lactonisation by the lactonohydrolases oryH or oryL could give oryzine B directly. Finally, enoyl reduction by the dehydrogenase oryD would then convert oryzine B into oryzine A. The protein is Cis-aconitate decarboxylase-like protein oryM of Aspergillus oryzae (strain ATCC 42149 / RIB 40) (Yellow koji mold).